The sequence spans 95 residues: Fluoride-specific ion channel FluC 1 (95 aa).

Helical transmembrane passes span 23 to 43 (LIDA…LMGW), 49 to 69 (LWGT…LLMF), and 70 to 90 (DGAY…WLLG). Residues G56 and T59 each contribute to the Na(+) site.

It belongs to the fluoride channel Fluc/FEX (TC 1.A.43) family.

It localises to the cell membrane. The enzyme catalyses fluoride(in) = fluoride(out). Na(+) is not transported, but it plays an essential structural role and its presence is essential for fluoride channel function. Its function is as follows. Fluoride-specific ion channel. Important for reducing fluoride concentration in the cell, thus reducing its toxicity. The sequence is that of Fluoride-specific ion channel FluC 1 from Corynebacterium diphtheriae (strain ATCC 700971 / NCTC 13129 / Biotype gravis).